We begin with the raw amino-acid sequence, 527 residues long: Lysine--tRNA ligase (527 aa).

Mg(2+) contacts are provided by Glu-431 and Glu-438.

Belongs to the class-II aminoacyl-tRNA synthetase family. As to quaternary structure, homodimer. It depends on Mg(2+) as a cofactor.

The protein resides in the cytoplasm. The catalysed reaction is tRNA(Lys) + L-lysine + ATP = L-lysyl-tRNA(Lys) + AMP + diphosphate. This chain is Lysine--tRNA ligase (lysS), found in Chlamydia pneumoniae (Chlamydophila pneumoniae).